The sequence spans 161 residues: Phosphopantetheine adenylyltransferase (161 aa).

A substrate-binding site is contributed by Ser8. ATP contacts are provided by residues 8–9 (SF) and His16. Residues 36–40 (ENPRK), Leu72, and Arg86 contribute to the substrate site. Residues 87–89 (GLR), Glu97, and 122–128 (FSFISSS) each bind ATP. Position 132 (Glu132) interacts with substrate.

The protein belongs to the bacterial CoaD family. As to quaternary structure, homohexamer. Mg(2+) serves as cofactor.

The protein localises to the cytoplasm. The enzyme catalyses (R)-4'-phosphopantetheine + ATP + H(+) = 3'-dephospho-CoA + diphosphate. Its pathway is cofactor biosynthesis; coenzyme A biosynthesis; CoA from (R)-pantothenate: step 4/5. Reversibly transfers an adenylyl group from ATP to 4'-phosphopantetheine, yielding dephospho-CoA (dPCoA) and pyrophosphate. The polypeptide is Phosphopantetheine adenylyltransferase (Thermotoga maritima (strain ATCC 43589 / DSM 3109 / JCM 10099 / NBRC 100826 / MSB8)).